The primary structure comprises 1364 residues: Kinectin (1364 aa).

At 1–6 (MEFYES) the chain is on the cytoplasmic side. A helical; Signal-anchor for type II membrane protein transmembrane segment spans residues 7 to 29 (TYFIILIPSVVITVIFLFFWLFM). At 30 to 1364 (KETLYDEVLA…KGREHYQLVE (1335 aa)) the chain is on the lumenal side. 4 stretches are compositionally biased toward basic and acidic residues: residues 46–56 (KFPPTKSDKKK), 73–86 (HESD…DFKL), 121–135 (QKAA…ESEG), and 170–179 (QKNDDQDTKT). Positions 46-207 (KFPPTKSDKK…VKQENVSGKK (162 aa)) are disordered. N-linked (GlcNAc...) asparagine glycans are attached at residues N202, N267, N623, N638, N704, N775, N976, N1061, N1088, and N1094. Positions 315-1085 (KASKAESAAA…VETRELLQKL (771 aa)) form a coiled coil. The stretch at 1116 to 1306 (SGSEDIKVME…ASLEREIGKV (191 aa)) forms a coiled coil.

This sequence belongs to the kinectin family. As to quaternary structure, parallel homodimers formed between the membrane-bound and the cytosolic form, and also between 2 cytosolic forms. Both the membrane and cytoplasmic forms seem to be myristoylated.

The protein localises to the endoplasmic reticulum membrane. Receptor for kinesin thus involved in kinesin-driven vesicle motility. The sequence is that of Kinectin (KTN1) from Gallus gallus (Chicken).